A 219-amino-acid polypeptide reads, in one-letter code: 7-cyano-7-deazaguanine synthase (219 aa).

8–18 (LSGGMDSAVLL) contributes to the ATP binding site. Zn(2+) contacts are provided by C185, C193, C196, and C199.

This sequence belongs to the QueC family. Zn(2+) serves as cofactor.

The enzyme catalyses 7-carboxy-7-deazaguanine + NH4(+) + ATP = 7-cyano-7-deazaguanine + ADP + phosphate + H2O + H(+). The protein operates within purine metabolism; 7-cyano-7-deazaguanine biosynthesis. Catalyzes the ATP-dependent conversion of 7-carboxy-7-deazaguanine (CDG) to 7-cyano-7-deazaguanine (preQ(0)). The polypeptide is 7-cyano-7-deazaguanine synthase (Desulfotalea psychrophila (strain LSv54 / DSM 12343)).